Here is a 231-residue protein sequence, read N- to C-terminus: Ribosyldihydronicotinamide dehydrogenase [quinone] (231 aa).

FAD is bound by residues H12 and 18–21 (FNGS). S80 bears the Phosphoserine mark. Residue 104–107 (LYWF) coordinates FAD. 127-129 (FDI) contributes to the substrate binding site. Residues 148-151 (TTGG) and Y156 each bind FAD. H174 and H178 together coordinate Zn(2+). Residue E194 participates in FAD binding. S197 is subject to Phosphoserine. R201 is an FAD binding site. C223 serves as a coordination point for Zn(2+).

This sequence belongs to the NAD(P)H dehydrogenase (quinone) family. In terms of assembly, homodimer. Requires Zn(2+) as cofactor. It depends on FAD as a cofactor.

The protein localises to the cytoplasm. It carries out the reaction 1-(beta-D-ribofuranosyl)-1,4-dihydronicotinamide + a quinone + H(+) = beta-nicotinamide D-riboside + a quinol. Its activity is regulated as follows. Inhibited by melatonin, resveratrol and 5-hydroxytryptamine. In terms of biological role, the enzyme apparently serves as a quinone reductase in connection with conjugation reactions of hydroquinones involved in detoxification pathways as well as in biosynthetic processes such as the vitamin K-dependent gamma-carboxylation of glutamate residues in prothrombin synthesis. This Homo sapiens (Human) protein is Ribosyldihydronicotinamide dehydrogenase [quinone] (NQO2).